The chain runs to 310 residues: Translocator protein BipD (310 aa).

2 coiled-coil regions span residues 127-171 and 250-299; these read DPIL…LQDY and DTAR…AIST.

It belongs to the invasin protein D family.

The protein resides in the secreted. In terms of biological role, required for invasion of epithelial cells, as well as for survival within host cells, escape from endocytic vesicles and subsequent actin-tail formation. Probably regulates the secretion of effectors BipB and BipC and their final integration into the target cell membrane. The protein is Translocator protein BipD (bipD) of Burkholderia mallei (strain NCTC 10247).